Reading from the N-terminus, the 325-residue chain is Diacylglycerol acyltransferase/mycolyltransferase Ag85B (325 aa).

Positions 1 to 40 (MTDVSRKIRAWGRRLMIGTAAAVVLPGLVGLAGGAATAGA) are cleaved as a signal peptide. Position 82-83 (82-83 (LR)) interacts with substrate. Positions 98–108 (FEWYYQSGLSI) are fibronectin-binding. Residues Cys127 and Cys132 are joined by a disulfide bond. The substrate site is built by Ser166 and Asp194. Ser166 (nucleophile) is an active-site residue. Residue Glu270 is part of the active site. Substrate is bound by residues 272-275 (FVRS), Lys279, and 302-304 (HSW). His302 is a catalytic residue.

Belongs to the mycobacterial A85 antigen family.

The protein resides in the secreted. The catalysed reaction is 2 alpha,alpha'-trehalose 6-mycolate = alpha,alpha'-trehalose 6,6'-bismycolate + alpha,alpha-trehalose. The enzyme catalyses an acyl-CoA + a 1,2-diacyl-sn-glycerol = a triacyl-sn-glycerol + CoA. In terms of biological role, the antigen 85 proteins (FbpA, FbpB, FbpC) are responsible for the high affinity of mycobacteria for fibronectin, a large adhesive glycoprotein, which facilitates the attachment of M.tuberculosis to murine alveolar macrophages (AMs). They also help to maintain the integrity of the cell wall by catalyzing the transfer of mycolic acids to cell wall arabinogalactan and through the synthesis of alpha,alpha-trehalose dimycolate (TDM, cord factor). They catalyze the transfer of a mycoloyl residue from one molecule of alpha,alpha-trehalose monomycolate (TMM) to another TMM, leading to the formation of TDM. The polypeptide is Diacylglycerol acyltransferase/mycolyltransferase Ag85B (fbpB) (Mycobacterium tuberculosis (strain ATCC 25177 / H37Ra)).